Reading from the N-terminus, the 385-residue chain is Glycine/sarcosine/betaine reductase complex component C subunit alpha (385 aa).

The active site involves Cys359.

In terms of assembly, heterooctamer of four alpha and four beta subunits. Component of the glycine, sarcosine and betaine reductase complexes, together with proteins A and B.

It catalyses the reaction acetyl phosphate + [thioredoxin]-disulfide + NH4(+) + H2O = [thioredoxin]-dithiol + glycine + phosphate + H(+). It carries out the reaction acetyl phosphate + methylamine + [thioredoxin]-disulfide + H2O = sarcosine + [thioredoxin]-dithiol + phosphate + H(+). The enzyme catalyses acetyl phosphate + trimethylamine + [thioredoxin]-disulfide + H2O = glycine betaine + [thioredoxin]-dithiol + phosphate + H(+). In terms of biological role, in the first step of glycine, betaine and sarcosine reductases, the substrate is bound to component PB via a Schiff base intermediate. Then the PB-activated substrate is nucleophilically attacked by the selenol anion of component PA to transform it to a carboxymethylated selenoether and the respective amine. By action of component PC, acetyl phosphate is formed, leaving component PA in its oxidized state. Finally component PA becomes reduced by the thioredoxin system to start a new catalytic cycle of reductive deamination. The chain is Glycine/sarcosine/betaine reductase complex component C subunit alpha (grdD) from Peptoclostridium acidaminophilum (Eubacterium acidaminophilum).